The primary structure comprises 1441 residues: Pleiotropic drug resistance protein TUR2 (1441 aa).

Residues 158-430 (LSALHLMPSG…FESMGFKCPE (273 aa)) enclose the ABC transporter 1 domain. 191 to 198 (GPPGAGKT) contributes to the ATP binding site. The 214-residue stretch at 508–721 (ELLKACIDRE…AQNAIAVNEF (214 aa)) folds into the ABC transmembrane type-2 1 domain. 6 consecutive transmembrane segments (helical) span residues 526-546 (FVYI…MTVF), 559-579 (ATIF…NGFA), 614-634 (IPIS…VIGF), 646-666 (LLLV…AAVG), 671-691 (VADT…GFII), and 756-776 (IGVG…ILFL). Residues 843-1095 (ITFDNVKYSV…HLIKYFESID (253 aa)) enclose the ABC transporter 2 domain. ATP is bound at residue 888-895 (GVSGRGKT). Positions 1168–1382 (MQCLACLWKQ…TLYGLVVSQF (215 aa)) constitute an ABC transmembrane type-2 2 domain. The next 7 membrane-spanning stretches (helical) occupy residues 1187–1207 (YTAT…TIFW), 1215–1235 (TSLD…FIGI), 1275–1295 (VPHI…MIGF), 1302–1322 (FLWY…YGMM), 1332–1352 (IAAI…GFII), 1363–1383 (WYYW…SQFG), and 1413–1433 (VVGV…AFSI).

This sequence belongs to the ABC transporter superfamily. ABCG family. PDR (TC 3.A.1.205) subfamily. Ubiquitous.

Its subcellular location is the cell membrane. Its function is as follows. May be a general defense protein. Seems involved in turion (dormant buds) formation. Confers resistance to the diterpenoid antifungal agent sclareol. In Spirodela polyrhiza (Giant duckweed), this protein is Pleiotropic drug resistance protein TUR2 (TUR2).